The sequence spans 287 residues: Small ribosomal subunit biogenesis GTPase RsgA (287 aa).

The CP-type G domain maps to 61 to 218 (SSELIRPTVA…LVDTPGFTTL (158 aa)). GTP contacts are provided by residues 110-113 (NKED) and 161-169 (GPSGAGKST). Residues cysteine 242, cysteine 247, histidine 249, and cysteine 255 each coordinate Zn(2+).

The protein belongs to the TRAFAC class YlqF/YawG GTPase family. RsgA subfamily. As to quaternary structure, monomer. Associates with 30S ribosomal subunit, binds 16S rRNA. Zn(2+) is required as a cofactor.

It is found in the cytoplasm. One of several proteins that assist in the late maturation steps of the functional core of the 30S ribosomal subunit. Helps release RbfA from mature subunits. May play a role in the assembly of ribosomal proteins into the subunit. Circularly permuted GTPase that catalyzes slow GTP hydrolysis, GTPase activity is stimulated by the 30S ribosomal subunit. The chain is Small ribosomal subunit biogenesis GTPase RsgA from Clostridium perfringens (strain ATCC 13124 / DSM 756 / JCM 1290 / NCIMB 6125 / NCTC 8237 / Type A).